Here is a 159-residue protein sequence, read N- to C-terminus: Endoribonuclease YbeY (159 aa).

Residues His-114, His-118, and His-124 each contribute to the Zn(2+) site.

It belongs to the endoribonuclease YbeY family. The cofactor is Zn(2+).

It is found in the cytoplasm. Its function is as follows. Single strand-specific metallo-endoribonuclease involved in late-stage 70S ribosome quality control and in maturation of the 3' terminus of the 16S rRNA. This chain is Endoribonuclease YbeY, found in Pectobacterium atrosepticum (strain SCRI 1043 / ATCC BAA-672) (Erwinia carotovora subsp. atroseptica).